A 141-amino-acid chain; its full sequence is uncharacterized protein (141 aa).

The next 2 helical transmembrane spans lie at 41 to 61 and 95 to 115; these read LIML…NYLF and IIFL…SGFF.

It localises to the cell membrane. This is an uncharacterized protein from Rickettsia prowazekii (strain Madrid E).